A 364-amino-acid chain; its full sequence is tRNA-specific 2-thiouridylase MnmA 2 (364 aa).

ATP contacts are provided by residues G10 to S17 and M36. The active-site Nucleophile is C106. Residues C106 and C204 are joined by a disulfide bond. ATP is bound at residue G130. Residues K154–Q156 are interaction with tRNA. C204 acts as the Cysteine persulfide intermediate in catalysis. Positions R310–Y311 are interaction with tRNA.

Belongs to the MnmA/TRMU family.

The protein localises to the cytoplasm. It carries out the reaction S-sulfanyl-L-cysteinyl-[protein] + uridine(34) in tRNA + AH2 + ATP = 2-thiouridine(34) in tRNA + L-cysteinyl-[protein] + A + AMP + diphosphate + H(+). Catalyzes the 2-thiolation of uridine at the wobble position (U34) of tRNA, leading to the formation of s(2)U34. This is tRNA-specific 2-thiouridylase MnmA 2 from Thermoanaerobacter pseudethanolicus (strain ATCC 33223 / 39E) (Clostridium thermohydrosulfuricum).